A 59-amino-acid chain; its full sequence is Large ribosomal subunit protein bL32 (59 aa).

Residues 1–59 (MAVQQNKKSPSKRGMHRSHDHLSAAPLAVEPTTGETHLRHHVSPNGYYRGRKVIKTKND) are disordered. Basic residues-rich tracts occupy residues 9-19 (SPSKRGMHRSH) and 49-59 (RGRKVIKTKND).

The protein belongs to the bacterial ribosomal protein bL32 family.

This Cupriavidus necator (strain ATCC 17699 / DSM 428 / KCTC 22496 / NCIMB 10442 / H16 / Stanier 337) (Ralstonia eutropha) protein is Large ribosomal subunit protein bL32.